The sequence spans 108 residues: Ig kappa chain V-V region MOPC 149 (108 aa).

The interval 1-23 (DIQMTQSPDYLSASVGETVTITC) is framework-1. Cys23 and Cys88 are joined by a disulfide. The tract at residues 24–34 (RASENIYSYLA) is complementarity-determining-1. The interval 35–49 (WYQQKQGKSPQLLVY) is framework-2. The segment at 50-56 (DAKTLVE) is complementarity-determining-2. Positions 57–88 (GVPSRFSGSGSGTQFSLKINSLQPEDFGSYYC) are framework-3. The complementarity-determining-3 stretch occupies residues 89–97 (QHHYGIPFT). The framework-4 stretch occupies residues 98 to 108 (FGSGTKLEIKR).

The sequence is that of Ig kappa chain V-V region MOPC 149 from Mus musculus (Mouse).